Consider the following 304-residue polypeptide: tRNA-uridine aminocarboxypropyltransferase 1 (304 aa).

The interval 1–30 is disordered; that stretch reads MALSPSVVPQESEENNANCVETKQSQTAST. A compositionally biased stretch (polar residues) spans 15–30; that stretch reads NNANCVETKQSQTAST. The DXTW motif lies at 206 to 209; the sequence is DSTW.

This sequence belongs to the TDD superfamily. DTWD1 family.

Its subcellular location is the nucleus. It catalyses the reaction a uridine in tRNA + S-adenosyl-L-methionine = a 3-[(3S)-3-amino-3-carboxypropyl]uridine in tRNA + S-methyl-5'-thioadenosine + H(+). Functionally, catalyzes the formation of 3-(3-amino-3-carboxypropyl)uridine (acp3U) at position 20 in the D-loop of several cytoplasmic tRNAs (acp3U(20)). The protein is tRNA-uridine aminocarboxypropyltransferase 1 of Rattus norvegicus (Rat).